A 166-amino-acid chain; its full sequence is MFPMVTEFMNYGQQTVRAARYIGQGFMITLSHANRLPVTIQYPYEKLITSERFRGRIHFEFDKCIACEVCVRVCPIDLPVVDWKLETDIRKKRLLNYSIDFGICIFCGNCVEYCPTNCLSMTEEYELSTYDRHELNYNQIALGRLPMSIIDDYTIRTILNLPEIKI.

4Fe-4S ferredoxin-type domains follow at residues 55 to 84 and 95 to 124; these read GRIHFEFDKCIACEVCVRVCPIDLPVVDWK and LNYSIDFGICIFCGNCVEYCPTNCLSMTEE. Positions 64, 67, 70, 74, 104, 107, 110, and 114 each coordinate [4Fe-4S] cluster.

The protein belongs to the complex I 23 kDa subunit family. In terms of assembly, NDH is composed of at least 16 different subunits, 5 of which are encoded in the nucleus. [4Fe-4S] cluster is required as a cofactor.

It is found in the plastid. It localises to the chloroplast thylakoid membrane. The enzyme catalyses a plastoquinone + NADH + (n+1) H(+)(in) = a plastoquinol + NAD(+) + n H(+)(out). The catalysed reaction is a plastoquinone + NADPH + (n+1) H(+)(in) = a plastoquinol + NADP(+) + n H(+)(out). Its function is as follows. NDH shuttles electrons from NAD(P)H:plastoquinone, via FMN and iron-sulfur (Fe-S) centers, to quinones in the photosynthetic chain and possibly in a chloroplast respiratory chain. The immediate electron acceptor for the enzyme in this species is believed to be plastoquinone. Couples the redox reaction to proton translocation, and thus conserves the redox energy in a proton gradient. The protein is NAD(P)H-quinone oxidoreductase subunit I, chloroplastic of Espeletia timotensis (Andean giant rosette).